Consider the following 305-residue polypeptide: Spermatogenesis-associated protein 4 (305 aa).

The Calponin-homology (CH) domain maps to 49–155 (SRLSRSVLRW…EEVYTLLTHR (107 aa)).

Its subcellular location is the nucleus. In terms of biological role, may play a role in apoptosis regulation. In Pan troglodytes (Chimpanzee), this protein is Spermatogenesis-associated protein 4 (SPATA4).